We begin with the raw amino-acid sequence, 397 residues long: Argininosuccinate synthase (397 aa).

ATP is bound by residues 9–17 (AFSGGLDTS) and alanine 35. 2 residues coordinate L-citrulline: tyrosine 88 and serine 93. Glycine 117 contacts ATP. L-aspartate-binding residues include threonine 119, asparagine 123, and aspartate 124. An L-citrulline-binding site is contributed by asparagine 123. Arginine 127 provides a ligand contact to L-citrulline.

Belongs to the argininosuccinate synthase family. Type 1 subfamily. In terms of assembly, homotetramer.

It is found in the cytoplasm. The enzyme catalyses L-citrulline + L-aspartate + ATP = 2-(N(omega)-L-arginino)succinate + AMP + diphosphate + H(+). The protein operates within amino-acid biosynthesis; L-arginine biosynthesis; L-arginine from L-ornithine and carbamoyl phosphate: step 2/3. This is Argininosuccinate synthase from Xanthomonas campestris pv. campestris (strain ATCC 33913 / DSM 3586 / NCPPB 528 / LMG 568 / P 25).